An 81-amino-acid chain; its full sequence is Short neurotoxin B (81 aa).

An N-terminal signal peptide occupies residues 1–21 (MKTLLLTLVVVTIVCLDLGYT). Cystine bridges form between cysteine 24–cysteine 43, cysteine 38–cysteine 60, cysteine 62–cysteine 73, and cysteine 74–cysteine 79.

Belongs to the three-finger toxin family. Short-chain subfamily. Type I alpha-neurotoxin sub-subfamily. In terms of tissue distribution, expressed by the venom gland.

It is found in the secreted. In terms of biological role, binds to muscle nicotinic acetylcholine receptor (nAChR) and inhibit acetylcholine from binding to the receptor, thereby impairing neuromuscular transmission. The sequence is that of Short neurotoxin B from Aipysurus laevis (Olive sea snake).